Reading from the N-terminus, the 274-residue chain is HTH-type transcriptional regulator GadX (274 aa).

The region spanning 145–242 (TRVCTVINNN…GMTPTEYQER (98 aa)) is the HTH araC/xylS-type domain. 2 consecutive DNA-binding regions (H-T-H motif) follow at residues 162 to 183 (ARIA…REEG) and 209 to 232 (IKRV…RNYY).

Homodimer.

Its function is as follows. Positively regulates the expression of about fifteen genes involved in acid resistance such as gadA, gadB and gadC. Depending on the conditions (growth phase and medium), can repress gadW. This Escherichia coli O6:H1 (strain CFT073 / ATCC 700928 / UPEC) protein is HTH-type transcriptional regulator GadX (gadX).